The primary structure comprises 370 residues: Cytochrome b (370 aa).

The next 4 membrane-spanning stretches (helical) occupy residues 25–45, 69–90, 105–125, and 170–190; these read FGSM…FLAV, WMMQ…YIHI, WLSG…GYVL, and FFAL…LHIL. Positions 75 and 89 each coordinate heme b. Heme b-binding residues include histidine 174 and histidine 188. Histidine 193 contacts a ubiquinone. Transmembrane regions (helical) follow at residues 218–238, 280–300, 312–332, and 339–358; these read YKDM…VSFF, LGGA…PFTH, LMQL…WTAT, and FTTI…ISNP.

Belongs to the cytochrome b family. As to quaternary structure, the cytochrome bc1 complex contains 3 respiratory subunits (MT-CYB, CYC1 and UQCRFS1), 2 core proteins (UQCRC1 and UQCRC2) and probably 6 low-molecular weight proteins. Requires heme b as cofactor.

Its subcellular location is the mitochondrion inner membrane. Its function is as follows. Component of the ubiquinol-cytochrome c reductase complex (complex III or cytochrome b-c1 complex) that is part of the mitochondrial respiratory chain. The b-c1 complex mediates electron transfer from ubiquinol to cytochrome c. Contributes to the generation of a proton gradient across the mitochondrial membrane that is then used for ATP synthesis. The chain is Cytochrome b (MT-CYB) from Chilabothrus strigilatus strigilatus (New Providence boa constrictor).